The following is a 239-amino-acid chain: Proteasome subunit beta type-6 (239 aa).

The residue at position 2 (Ala-2) is an N-acetylalanine. Positions 2 to 34 (AATLLAARGAGPAPAWGPEAFTPDWESREVSTG) are cleaved as a propeptide — removed in mature form. Thr-35 serves as the catalytic Nucleophile. At Thr-69 the chain carries Phosphothreonine.

Belongs to the peptidase T1B family. As to quaternary structure, the 26S proteasome consists of a 20S proteasome core and two 19S regulatory subunits. The 20S proteasome core is a barrel-shaped complex made of 28 subunits that are arranged in four stacked rings. The two outer rings are each formed by seven alpha subunits, and the two inner rings are formed by seven beta subunits. The proteolytic activity is exerted by three beta-subunits PSMB5, PSMB6 and PSMB7. In terms of assembly, (Microbial infection) Interacts with HIV-1 protein Tat.

Its subcellular location is the cytoplasm. It localises to the nucleus. It catalyses the reaction Cleavage of peptide bonds with very broad specificity.. In terms of biological role, component of the 20S core proteasome complex involved in the proteolytic degradation of most intracellular proteins. This complex plays numerous essential roles within the cell by associating with different regulatory particles. Associated with two 19S regulatory particles, forms the 26S proteasome and thus participates in the ATP-dependent degradation of ubiquitinated proteins. The 26S proteasome plays a key role in the maintenance of protein homeostasis by removing misfolded or damaged proteins that could impair cellular functions, and by removing proteins whose functions are no longer required. Associated with the PA200 or PA28, the 20S proteasome mediates ubiquitin-independent protein degradation. This type of proteolysis is required in several pathways including spermatogenesis (20S-PA200 complex) or generation of a subset of MHC class I-presented antigenic peptides (20S-PA28 complex). Within the 20S core complex, PSMB6 displays a peptidylglutamyl-hydrolizing activity also termed postacidic or caspase-like activity, meaning that the peptides bond hydrolysis occurs directly after acidic residues. This is Proteasome subunit beta type-6 from Homo sapiens (Human).